A 299-amino-acid polypeptide reads, in one-letter code: FFTIWLDINMFLPLGVDCWIDNTRVVYNRSSGRMSNAPGVQIRVPGFGKTYSVEYLDDNKLAGYLHTLVQNLVNNAYVRDETVRAAPYDWRLAPSQQDEYYQKLAELVEEMYDAYGKPVFLIGHRLGCLHVLHFLLHQSWKGIPIMSNIKLKEEQRITTTSPWMFPAHHVWPEDHVFISTPNFNYTGQDFKRFFADLHFEEGWYMFLQSRDLLEGLPAPGVEVYCLYGVGRPTRYTYIYDHNFPYKDPVAILYEDGDETVATRSTELCGQWQGRQSQPVYLLPMNGTDHLNMVFSNKTL.

Residues Asn28 and Asn184 are each glycosylated (N-linked (GlcNAc...) asparagine). A disulfide bond links Cys225 and Cys268. Asp257 serves as the catalytic Charge relay system. Residue Asn285 is glycosylated (N-linked (GlcNAc...) asparagine). His289 functions as the Charge relay system in the catalytic mechanism. Asn296 carries N-linked (GlcNAc...) asparagine glycosylation.

Belongs to the AB hydrolase superfamily. Lipase family.

The protein resides in the secreted. The enzyme catalyses a sterol + a 1,2-diacyl-sn-glycero-3-phosphocholine = a sterol ester + a 1-acyl-sn-glycero-3-phosphocholine. APOA1 is the most potent activator in plasma. Also activated by APOE, APOC1 and APOA4. In terms of biological role, central enzyme in the extracellular metabolism of plasma lipoproteins. Synthesized mainly in the liver and secreted into plasma where it converts cholesterol and phosphatidylcholines (lecithins) to cholesteryl esters and lysophosphatidylcholines on the surface of high and low density lipoproteins (HDLs and LDLs). The cholesterol ester is then transported back to the liver. Has a preference for plasma 16:0-18:2 or 18:O-18:2 phosphatidylcholines. Also produced in the brain by primary astrocytes, and esterifies free cholesterol on nascent APOE-containing lipoproteins secreted from glia and influences cerebral spinal fluid (CSF) APOE- and APOA1 levels. Together with APOE and the cholesterol transporter ABCA1, plays a key role in the maturation of glial-derived, nascent lipoproteins. Required for remodeling high-density lipoprotein particles into their spherical forms. The protein is Phosphatidylcholine-sterol acyltransferase (LCAT) of Micromys minutus (European harvest mouse).